The sequence spans 462 residues: Retinoic acid receptor alpha (462 aa).

A modulating region spans residues 1–87 (MASNSSSCPT…PPPLPRIYKP (87 aa)). Over residues 52 to 64 (GYSTPSPATIETQ) the composition is skewed to polar residues. The segment at 52–77 (GYSTPSPATIETQSSSSEEIVPSPPS) is disordered. Position 77 is a phosphoserine; by CDK7 (S77). 2 consecutive NR C4-type zinc fingers follow at residues 88-108 (CFVC…CEGC) and 124-148 (CHRD…LQKC). A DNA-binding region (nuclear receptor) is located at residues 88–153 (CFVCQDKSSG…RLQKCFEVGM (66 aa)). S96 is subject to Phosphoserine; by PKB/AKT1. Residues 154-182 (SKESVRNDRNKKKKEVPKPECSESYTLTP) are hinge. Glycyl lysine isopeptide (Lys-Gly) (interchain with G-Cter in SUMO) cross-links involve residues K166 and K171. The NR LBD domain maps to 183–417 (EVGELIEKVR…PLIQEMLENS (235 aa)). The residue at position 219 (S219) is a Phosphoserine; by PKA. Residue C235 participates in all-trans-retinoate binding. Positions 254–258 (IADQI) match the UBR5-degron motif. Position 287 (S287) interacts with all-trans-retinoate. A Phosphoserine; by PKA modification is found at S369. K399 participates in a covalent cross-link: Glycyl lysine isopeptide (Lys-Gly) (interchain with G-Cter in SUMO). The required for binding corepressor NCOR1 stretch occupies residues 404–419 (GSMPPLIQEMLENSEG). The 9aaTAD signature appears at 408-416 (PLIQEMLEN). The interval 419–462 (GLDTLSGQPGGGGRDGGGLAPPPGSCSPSLSPSSNRSSPATHSP) is disordered. Positions 426–437 (QPGGGGRDGGGL) are enriched in gly residues. The segment covering 444 to 462 (CSPSLSPSSNRSSPATHSP) has biased composition (low complexity).

This sequence belongs to the nuclear hormone receptor family. NR1 subfamily. In terms of assembly, heterodimer; with RXRA (via C-terminus); association with RXRA is enhanced by pulsatile shear stress. Binds DNA preferentially as a heterodimer. RXRA serves as enhancer to induce RARA binding to RARE. Interacts with RXRG. Interacts with coactivators NCOA3 and NCOA6. Interacts with NCOA7; the interaction requires ligand-binding. Interacts (via the ligand-binding domain) with PRAME; the interaction is ligand (retinoic acid)-dependent. Interacts with AKT1; the interaction phosphorylates RARA and represses transactivation. Interacts with PRKAR1A; the interaction negatively regulates RARA transcriptional activity. Interacts with NCOR1 and NCOR2. Interacts with PRMT2. Interacts with LRIF1. Interacts with ASXL1 and NCOA1. Interacts with ACTN4. In a complex with HDAC3, HDAC5 and HDAC7; the HDACs serve as corepressors of RARA, causing its deacetylation and inhibition of RARE DNA element binding; association with HDAC3, HDAC5 and HDAC7 is increased upon oscillatory shear stress. Interacts with CDK7. In the absence of hormonal ligand, interacts with TACC1. In terms of processing, phosphorylated on serine and threonine residues. Phosphorylation does not change during cell cycle. Phosphorylation on Ser-77 is crucial for transcriptional activity. Phosphorylation by AKT1 is required for the repressor activity but has no effect on DNA binding, protein stability nor subcellular localization. Phosphorylated by PKA in vitro. This phosphorylation on Ser-219 and Ser-369 is critical for ligand binding, nuclear localization and transcriptional activity in response to FSH signaling. Sumoylated with SUMO2, mainly on Lys-399 which is also required for SENP6 binding. On all-trans retinoic acid (ATRA) binding, a conformational change may occur that allows sumoylation on two additional site, Lys-166 and Lys-171. Probably desumoylated by SENP6. Sumoylation levels determine nuclear localization and regulate ATRA-mediated transcriptional activity. Post-translationally, trimethylation enhances heterodimerization with RXRA and positively modulates the transcriptional activation. In terms of processing, ubiquitinated by UBR5, leading to its degradation: UBR5 specifically recognizes and binds ligand-bound RARA when it is not associated with coactivators (NCOAs). In presence of NCOAs, the UBR5-degron is not accessible, preventing its ubiquitination and degradation. Acetylated; acetylation is increased upon pulsatile shear stress and decreased upon oscillatory shear stress. In terms of tissue distribution, expressed in monocytes.

The protein resides in the nucleus. It is found in the cytoplasm. In terms of biological role, receptor for retinoic acid. Retinoic acid receptors bind as heterodimers to their target response elements in response to their ligands, all-trans or 9-cis retinoic acid, and regulate gene expression in various biological processes. The RXR/RAR heterodimers bind to the retinoic acid response elements (RARE) composed of tandem 5'-AGGTCA-3' sites known as DR1-DR5. In the absence of ligand, the RXR-RAR heterodimers associate with a multiprotein complex containing transcription corepressors that induce histone deacetylation, chromatin condensation and transcriptional suppression. On ligand binding, the corepressors dissociate from the receptors and associate with the coactivators leading to transcriptional activation. Formation of a complex with histone deacetylases might lead to inhibition of RARE DNA element binding and to transcriptional repression. Transcriptional activation and RARE DNA element binding might be supported by the transcription factor KLF2. RARA plays an essential role in the regulation of retinoic acid-induced germ cell development during spermatogenesis. Has a role in the survival of early spermatocytes at the beginning prophase of meiosis. In Sertoli cells, may promote the survival and development of early meiotic prophase spermatocytes. In concert with RARG, required for skeletal growth, matrix homeostasis and growth plate function. Together with RXRA, positively regulates microRNA-10a expression, thereby inhibiting the GATA6/VCAM1 signaling response to pulsatile shear stress in vascular endothelial cells. In association with HDAC3, HDAC5 and HDAC7 corepressors, plays a role in the repression of microRNA-10a and thereby promotes the inflammatory response. This is Retinoic acid receptor alpha (RARA) from Homo sapiens (Human).